Consider the following 648-residue polypeptide: 1-deoxy-D-xylulose-5-phosphate synthase (648 aa).

Residues His-74 and 115-117 (GHA) contribute to the thiamine diphosphate site. Position 146 (Asp-146) interacts with Mg(2+). Thiamine diphosphate is bound by residues 147-148 (GA), Asn-176, Tyr-292, and Glu-375. Mg(2+) is bound at residue Asn-176.

It belongs to the transketolase family. DXPS subfamily. In terms of assembly, homodimer. Requires Mg(2+) as cofactor. Thiamine diphosphate serves as cofactor.

The catalysed reaction is D-glyceraldehyde 3-phosphate + pyruvate + H(+) = 1-deoxy-D-xylulose 5-phosphate + CO2. Its pathway is metabolic intermediate biosynthesis; 1-deoxy-D-xylulose 5-phosphate biosynthesis; 1-deoxy-D-xylulose 5-phosphate from D-glyceraldehyde 3-phosphate and pyruvate: step 1/1. In terms of biological role, catalyzes the acyloin condensation reaction between C atoms 2 and 3 of pyruvate and glyceraldehyde 3-phosphate to yield 1-deoxy-D-xylulose-5-phosphate (DXP). In Synechococcus sp. (strain JA-2-3B'a(2-13)) (Cyanobacteria bacterium Yellowstone B-Prime), this protein is 1-deoxy-D-xylulose-5-phosphate synthase.